Consider the following 244-residue polypeptide: Phosphoadenosine 5'-phosphosulfate reductase (244 aa).

Catalysis depends on Cys239, which acts as the Nucleophile; cysteine thiosulfonate intermediate.

It belongs to the PAPS reductase family. CysH subfamily.

Its subcellular location is the cytoplasm. The enzyme catalyses [thioredoxin]-disulfide + sulfite + adenosine 3',5'-bisphosphate + 2 H(+) = [thioredoxin]-dithiol + 3'-phosphoadenylyl sulfate. Its pathway is sulfur metabolism; hydrogen sulfide biosynthesis; sulfite from sulfate: step 3/3. In terms of biological role, catalyzes the formation of sulfite from phosphoadenosine 5'-phosphosulfate (PAPS) using thioredoxin as an electron donor. The sequence is that of Phosphoadenosine 5'-phosphosulfate reductase from Salmonella schwarzengrund (strain CVM19633).